We begin with the raw amino-acid sequence, 157 residues long: Xanthine-guanine phosphoribosyltransferase (157 aa).

5-phospho-alpha-D-ribose 1-diphosphate-binding positions include Arg42–Gly43 and Asp93–Thr101. Asp94 contacts Mg(2+). The guanine site is built by Asp97 and Ile140. Xanthine contacts are provided by Asp97 and Ile140. GMP-binding positions include Asp97–Thr101 and Trp139–Ile140.

The protein belongs to the purine/pyrimidine phosphoribosyltransferase family. XGPT subfamily. As to quaternary structure, homotetramer. The cofactor is Mg(2+).

The protein resides in the cell inner membrane. It catalyses the reaction GMP + diphosphate = guanine + 5-phospho-alpha-D-ribose 1-diphosphate. The enzyme catalyses XMP + diphosphate = xanthine + 5-phospho-alpha-D-ribose 1-diphosphate. The catalysed reaction is IMP + diphosphate = hypoxanthine + 5-phospho-alpha-D-ribose 1-diphosphate. Its pathway is purine metabolism; GMP biosynthesis via salvage pathway; GMP from guanine: step 1/1. The protein operates within purine metabolism; XMP biosynthesis via salvage pathway; XMP from xanthine: step 1/1. Its function is as follows. Purine salvage pathway enzyme that catalyzes the transfer of the ribosyl-5-phosphate group from 5-phospho-alpha-D-ribose 1-diphosphate (PRPP) to the N9 position of the 6-oxopurines guanine and xanthine to form the corresponding ribonucleotides GMP (guanosine 5'-monophosphate) and XMP (xanthosine 5'-monophosphate), with the release of PPi. To a lesser extent, also acts on hypoxanthine. This is Xanthine-guanine phosphoribosyltransferase from Actinobacillus pleuropneumoniae serotype 5b (strain L20).